The chain runs to 203 residues: Holliday junction branch migration complex subunit RuvA (203 aa).

The segment at 1-63 (MIGKLSGKID…EEHIHLYGFL (63 aa)) is domain I. The interval 64–142 (TIEEKNFFNL…KISTGAAIIN (79 aa)) is domain II. Residues 143 to 149 (DSLNIKN) form a flexible linker region. The domain III stretch occupies residues 150–203 (ITSVASNEVIKALVNLGFSRFEAQNSVQGIVIQNPEISIDELIKTALKNRNAGL).

It belongs to the RuvA family. As to quaternary structure, homotetramer. Forms an RuvA(8)-RuvB(12)-Holliday junction (HJ) complex. HJ DNA is sandwiched between 2 RuvA tetramers; dsDNA enters through RuvA and exits via RuvB. An RuvB hexamer assembles on each DNA strand where it exits the tetramer. Each RuvB hexamer is contacted by two RuvA subunits (via domain III) on 2 adjacent RuvB subunits; this complex drives branch migration. In the full resolvosome a probable DNA-RuvA(4)-RuvB(12)-RuvC(2) complex forms which resolves the HJ.

It is found in the cytoplasm. Functionally, the RuvA-RuvB-RuvC complex processes Holliday junction (HJ) DNA during genetic recombination and DNA repair, while the RuvA-RuvB complex plays an important role in the rescue of blocked DNA replication forks via replication fork reversal (RFR). RuvA specifically binds to HJ cruciform DNA, conferring on it an open structure. The RuvB hexamer acts as an ATP-dependent pump, pulling dsDNA into and through the RuvAB complex. HJ branch migration allows RuvC to scan DNA until it finds its consensus sequence, where it cleaves and resolves the cruciform DNA. This chain is Holliday junction branch migration complex subunit RuvA, found in Rickettsia akari (strain Hartford).